Consider the following 866-residue polypeptide: Probable beta-glucosidase F (866 aa).

Residues methionine 1–serine 20 form the signal peptide. N-linked (GlcNAc...) asparagine glycosylation is found at asparagine 65, asparagine 73, and asparagine 257. Aspartate 285 is an active-site residue. N-linked (GlcNAc...) asparagine glycosylation is found at asparagine 328, asparagine 360, asparagine 395, asparagine 421, asparagine 474, asparagine 659, asparagine 664, and asparagine 724. Residues serine 725–alanine 748 are disordered.

It belongs to the glycosyl hydrolase 3 family.

The protein localises to the secreted. It carries out the reaction Hydrolysis of terminal, non-reducing beta-D-glucosyl residues with release of beta-D-glucose.. It functions in the pathway glycan metabolism; cellulose degradation. In terms of biological role, beta-glucosidases are one of a number of cellulolytic enzymes involved in the degradation of cellulosic biomass. Catalyzes the last step releasing glucose from the inhibitory cellobiose. The chain is Probable beta-glucosidase F (bglF) from Aspergillus flavus (strain ATCC 200026 / FGSC A1120 / IAM 13836 / NRRL 3357 / JCM 12722 / SRRC 167).